The chain runs to 1196 residues: Nucleolar protein 6 (1196 aa).

Disordered stretches follow at residues Met1 to Pro75 and Lys1140 to Lys1196. A compositionally biased stretch (basic and acidic residues) spans His22–His31. The segment covering Lys1165–Gly1174 has biased composition (basic residues).

Belongs to the NRAP family. In terms of assembly, part of the small subunit (SSU) processome, composed of more than 70 proteins and the RNA chaperone small nucleolar RNA (snoRNA) U3.

The protein resides in the nucleus. It is found in the nucleolus. Its subcellular location is the chromosome. Functionally, part of the small subunit (SSU) processome, first precursor of the small eukaryotic ribosomal subunit. During the assembly of the SSU processome in the nucleolus, many ribosome biogenesis factors, an RNA chaperone and ribosomal proteins associate with the nascent pre-rRNA and work in concert to generate RNA folding, modifications, rearrangements and cleavage as well as targeted degradation of pre-ribosomal RNA by the RNA exosome. The chain is Nucleolar protein 6 from Drosophila sechellia (Fruit fly).